A 549-amino-acid polypeptide reads, in one-letter code: Glucose-6-phosphate isomerase (549 aa).

The Proton donor role is filled by E355. Residues H386 and K514 contribute to the active site.

Belongs to the GPI family.

Its subcellular location is the cytoplasm. The catalysed reaction is alpha-D-glucose 6-phosphate = beta-D-fructose 6-phosphate. It participates in carbohydrate biosynthesis; gluconeogenesis. It functions in the pathway carbohydrate degradation; glycolysis; D-glyceraldehyde 3-phosphate and glycerone phosphate from D-glucose: step 2/4. Its function is as follows. Catalyzes the reversible isomerization of glucose-6-phosphate to fructose-6-phosphate. The protein is Glucose-6-phosphate isomerase of Klebsiella pneumoniae subsp. pneumoniae (strain ATCC 700721 / MGH 78578).